We begin with the raw amino-acid sequence, 1343 residues long: DNA-directed RNA polymerase subunit beta (1343 aa).

The protein belongs to the RNA polymerase beta chain family. The RNAP catalytic core consists of 2 alpha, 1 beta, 1 beta' and 1 omega subunit. When a sigma factor is associated with the core the holoenzyme is formed, which can initiate transcription.

The enzyme catalyses RNA(n) + a ribonucleoside 5'-triphosphate = RNA(n+1) + diphosphate. Its function is as follows. DNA-dependent RNA polymerase catalyzes the transcription of DNA into RNA using the four ribonucleoside triphosphates as substrates. The sequence is that of DNA-directed RNA polymerase subunit beta from Shewanella baltica (strain OS155 / ATCC BAA-1091).